The chain runs to 870 residues: DNA mismatch repair protein MutS (870 aa).

622–629 contacts ATP; that stretch reads GPNMGGKS.

This sequence belongs to the DNA mismatch repair MutS family.

In terms of biological role, this protein is involved in the repair of mismatches in DNA. It is possible that it carries out the mismatch recognition step. This protein has a weak ATPase activity. This chain is DNA mismatch repair protein MutS, found in Methylibium petroleiphilum (strain ATCC BAA-1232 / LMG 22953 / PM1).